The primary structure comprises 595 residues: Adenine deaminase 2 (595 aa).

This sequence belongs to the metallo-dependent hydrolases superfamily. Adenine deaminase family. It depends on Mn(2+) as a cofactor.

It carries out the reaction adenine + H2O + H(+) = hypoxanthine + NH4(+). The protein is Adenine deaminase 2 of Rhizobium etli (strain ATCC 51251 / DSM 11541 / JCM 21823 / NBRC 15573 / CFN 42).